Reading from the N-terminus, the 221-residue chain is ATP phosphoribosyltransferase (221 aa).

It belongs to the ATP phosphoribosyltransferase family. Short subfamily. In terms of assembly, heteromultimer composed of HisG and HisZ subunits.

Its subcellular location is the cytoplasm. It carries out the reaction 1-(5-phospho-beta-D-ribosyl)-ATP + diphosphate = 5-phospho-alpha-D-ribose 1-diphosphate + ATP. Its pathway is amino-acid biosynthesis; L-histidine biosynthesis; L-histidine from 5-phospho-alpha-D-ribose 1-diphosphate: step 1/9. Its function is as follows. Catalyzes the condensation of ATP and 5-phosphoribose 1-diphosphate to form N'-(5'-phosphoribosyl)-ATP (PR-ATP). Has a crucial role in the pathway because the rate of histidine biosynthesis seems to be controlled primarily by regulation of HisG enzymatic activity. The polypeptide is ATP phosphoribosyltransferase (Symbiobacterium thermophilum (strain DSM 24528 / JCM 14929 / IAM 14863 / T)).